We begin with the raw amino-acid sequence, 408 residues long: Elongation factor Tu (408 aa).

The 210-residue stretch at 10–219 (KTHVNVGTIG…ALDTYIPDPV (210 aa)) folds into the tr-type G domain. GTP-binding positions include 19–26 (GHVDHGKT), 88–92 (DCPGH), and 143–146 (NKCD). Thr26 is a Mg(2+) binding site.

This sequence belongs to the TRAFAC class translation factor GTPase superfamily. Classic translation factor GTPase family. EF-Tu/EF-1A subfamily. In terms of assembly, monomer.

It is found in the cytoplasm. The catalysed reaction is GTP + H2O = GDP + phosphate + H(+). Functionally, GTP hydrolase that promotes the GTP-dependent binding of aminoacyl-tRNA to the A-site of ribosomes during protein biosynthesis. This is Elongation factor Tu from Brachyspira hyodysenteriae (strain ATCC 49526 / WA1).